Here is an 82-residue protein sequence, read N- to C-terminus: uncharacterized protein (82 aa).

Its function is as follows. This protein may be involved in virus assembly. This is an uncharacterized protein from Sulfolobus spindle-shape virus 1 (SSV1).